Here is a 354-residue protein sequence, read N- to C-terminus: Type II methylase M.HgiDII (354 aa).

The SAM-dependent MTase C5-type domain maps to 3–344 (GAVIDLFCGV…KSIKRFLEGL (342 aa)). Residue Cys-79 is part of the active site.

It belongs to the class I-like SAM-binding methyltransferase superfamily. C5-methyltransferase family.

The enzyme catalyses a 2'-deoxycytidine in DNA + S-adenosyl-L-methionine = a 5-methyl-2'-deoxycytidine in DNA + S-adenosyl-L-homocysteine + H(+). In terms of biological role, a methylase that recognizes the double-stranded sequence 5'-GTCGAC-3', methylates C-? on both strands and protects the DNA from cleavage by the HgiDII endonuclease. In Herpetosiphon aurantiacus (Herpetosiphon giganteus), this protein is Type II methylase M.HgiDII.